We begin with the raw amino-acid sequence, 380 residues long: Alkaline protease (380 aa).

The signal sequence occupies residues 1–27; the sequence is MKKPLGKIVASTALLISVAFSSSIASA. Residues 28 to 111 constitute a propeptide that is removed on maturation; the sequence is AEEAKEKYLI…IEEDAEVTTM (84 aa). In terms of domain architecture, Inhibitor I9 spans 34–111; sequence KYLIGFNEQE…IEEDAEVTTM (78 aa). Q113 serves as a coordination point for Ca(2+). One can recognise a Peptidase S8 domain in the interval 116–379; the sequence is PWGISRVQAP…SGLVNAEAAT (264 aa). The active-site Charge relay system is the D143. Ca(2+) is bound at residue D151. H173 functions as the Charge relay system in the catalytic mechanism. Residues L184, N186, I188, V190, A274, Y276, and A279 each coordinate Ca(2+). The Charge relay system role is filled by S326.

It belongs to the peptidase S8 family. Ca(2+) serves as cofactor.

The protein resides in the secreted. The polypeptide is Alkaline protease (Shouchella clausii (Alkalihalobacillus clausii)).